Reading from the N-terminus, the 200-residue chain is A-type ATP synthase subunit E (200 aa).

Belongs to the V-ATPase E subunit family. In terms of assembly, has multiple subunits with at least A(3), B(3), C, D, E, F, H, I and proteolipid K(x).

Its subcellular location is the cell membrane. Functionally, component of the A-type ATP synthase that produces ATP from ADP in the presence of a proton gradient across the membrane. The protein is A-type ATP synthase subunit E of Methanopyrus kandleri (strain AV19 / DSM 6324 / JCM 9639 / NBRC 100938).